Reading from the N-terminus, the 465-residue chain is Uridine kinase-like protein 5 (465 aa).

A uridine kinase region spans residues 26–230; it reads LKQPFVIGVA…IVQHIRTKLC (205 aa). Residues 240-465 are uracil phosphoribosyltransferase; that stretch reads NIFIISSTFQ…SLSTNLKLRS (226 aa). Residues Lys-264, Arg-273, and 307–310 each bind GTP; that span reads CKRL. Residues Arg-317 and Arg-342 each coordinate 5-phospho-alpha-D-ribose 1-diphosphate. Arg-362 provides a ligand contact to GTP. 5-phospho-alpha-D-ribose 1-diphosphate contacts are provided by residues Asp-368, 373–376, and Glu-439; that span reads SGYS. 438–440 is a uracil binding site; that stretch reads GEF.

The protein in the N-terminal section; belongs to the uridine kinase family. This sequence in the C-terminal section; belongs to the UPRTase family. Mg(2+) serves as cofactor.

The catalysed reaction is UMP + diphosphate = 5-phospho-alpha-D-ribose 1-diphosphate + uracil. The enzyme catalyses cytidine + ATP = CMP + ADP + H(+). It carries out the reaction uridine + ATP = UMP + ADP + H(+). It participates in pyrimidine metabolism; UMP biosynthesis via salvage pathway; UMP from uracil: step 1/1. It functions in the pathway pyrimidine metabolism; CTP biosynthesis via salvage pathway; CTP from cytidine: step 1/3. Its pathway is pyrimidine metabolism; UMP biosynthesis via salvage pathway; UMP from uridine: step 1/1. With respect to regulation, allosterically activated by GTP. Its function is as follows. Involved in the pyrimidine salvage pathway. This chain is Uridine kinase-like protein 5 (UKL5), found in Arabidopsis thaliana (Mouse-ear cress).